The following is a 599-amino-acid chain: MDPKYIRNFSIIAHIDHGKSTLADGLLSATGSLSDREKKDQFLDNMELERERGITIKAQTVCLDFKSKDGNMYQINLIDTPGHVDFSYEVSRSLAACEGAILVVDAAQGVEAQTLANVYLAMENNLEIIPVLNKIDLPSADPEGVAKQIEDTVGLDCTGIIHASAKEKIGITDILEAIVEKVPPPKADRSLTPRALIFDSWFDAYQGVVVLVRMVDGVIKKGDKIKFMATDRDYEVLRMGKYKPFPLMQDVLEAGEVGFIVCGIKDIRDVQVGDTVTSAKHPATQPLAGFQRIKPMVFAGIFPVVASEYENLKDALDKLCLNDSSLTFEVEKSAALGFGYRCGFLGLLHMEIVQERLEREFNLDLITTAPTVVYRITKTDGTEMMLENPSGMPVETQIAKFEEPYVKVTLHTPTDYIGGILKLCEDKRGIQQKMEYVTDKKVIIEYKLPMNEMVMDFYDRLKSISKGYASLEYEFVGFEESDLVKLDILINGEAIDALSLIVHRSKAQNRGRLLAEKMKELIPRQMYQVAIQAAIGAKIIARETLGAIRKDVTAKCYGGDISRKRKLLEKQKEGKKRMKAIGHVEVPQEAFLAILKVED.

The region spanning 4–186 (KYIRNFSIIA…AIVEKVPPPK (183 aa)) is the tr-type G domain. Residues 16–21 (DHGKST) and 133–136 (NKID) contribute to the GTP site.

It belongs to the TRAFAC class translation factor GTPase superfamily. Classic translation factor GTPase family. LepA subfamily.

It is found in the cell inner membrane. It carries out the reaction GTP + H2O = GDP + phosphate + H(+). Its function is as follows. Required for accurate and efficient protein synthesis under certain stress conditions. May act as a fidelity factor of the translation reaction, by catalyzing a one-codon backward translocation of tRNAs on improperly translocated ribosomes. Back-translocation proceeds from a post-translocation (POST) complex to a pre-translocation (PRE) complex, thus giving elongation factor G a second chance to translocate the tRNAs correctly. Binds to ribosomes in a GTP-dependent manner. The chain is Elongation factor 4 from Bdellovibrio bacteriovorus (strain ATCC 15356 / DSM 50701 / NCIMB 9529 / HD100).